Here is a 192-residue protein sequence, read N- to C-terminus: Large ribosomal subunit protein bL25 (192 aa).

Belongs to the bacterial ribosomal protein bL25 family. CTC subfamily. Part of the 50S ribosomal subunit; part of the 5S rRNA/L5/L18/L25 subcomplex. Contacts the 5S rRNA. Binds to the 5S rRNA independently of L5 and L18.

Its function is as follows. This is one of the proteins that binds to the 5S RNA in the ribosome where it forms part of the central protuberance. This is Large ribosomal subunit protein bL25 from Cytophaga hutchinsonii (strain ATCC 33406 / DSM 1761 / CIP 103989 / NBRC 15051 / NCIMB 9469 / D465).